We begin with the raw amino-acid sequence, 72 residues long: Toxin Acra II-2 (72 aa).

Positions 3-67 (VPGNYPLNTN…VWNAAKNYCK (65 aa)) constitute an LCN-type CS-alpha/beta domain. Intrachain disulfides connect Cys-18/Cys-41, Cys-27/Cys-46, and Cys-31/Cys-48.

This sequence belongs to the long (3 C-C) scorpion toxin superfamily. Sodium channel inhibitor family. Beta subfamily. In terms of tissue distribution, expressed by the venom gland.

Its subcellular location is the secreted. Its function is as follows. Binds to sodium channels (Nav) and affects the channel activation process. This chain is Toxin Acra II-2, found in Androctonus crassicauda (Arabian fat-tailed scorpion).